The following is a 412-amino-acid chain: MKENFNISKLKNGLTILTYNMPYVHSVAINLIAKVGARYENEEEEGISHFLEHMAFKGTKTRTAQQIAEEFDSIGGYFNAYTGYENTVYYVRVLSENCHKALNILADIIQNSIFADEEISKEYQIIMQEIAHHHDNPDDLIYETFYNTVYKDQPLGKSILGTAKTLVKFTQEHFLNFIGKHYNAENLYLSIAGNIEHNKIVIIAEELFASLKQGVTSSFIPAKYIGGKGFIHKELEQTSLVLGFECTSYINLEKLYQTYLLSIIFGGGVSSRLFQSIREKLGLAYVVGSYNSAYFDSGVFTIYASTAHEKLELLYSEIKNEIIKITETVSTEELMRAKIQLRSNLQMAQEQNSYKSEEIGKNYSVFGKYILPEEIIEIITNIKADDIINTANKIFSGTTALAIIGPNDLNGF.

His-49 lines the Zn(2+) pocket. The active-site Proton acceptor is the Glu-52. Residues His-53 and Glu-129 each contribute to the Zn(2+) site.

This sequence belongs to the peptidase M16 family. It depends on Zn(2+) as a cofactor.

This is an uncharacterized protein from Rickettsia typhi (strain ATCC VR-144 / Wilmington).